The primary structure comprises 220 residues: Thymidylate kinase (220 aa).

ATP is bound at residue 10 to 17; it reads GIDGCGKS.

This sequence belongs to the thymidylate kinase family.

It catalyses the reaction dTMP + ATP = dTDP + ADP. In terms of biological role, phosphorylation of dTMP to form dTDP in both de novo and salvage pathways of dTTP synthesis. The chain is Thymidylate kinase from Prochlorococcus marinus (strain SARG / CCMP1375 / SS120).